The primary structure comprises 474 residues: Sialyltransferase-like protein 1 (474 aa).

Over 1-14 the chain is Cytoplasmic; that stretch reads MRSHQAGRKLPLLQ. The chain crosses the membrane as a helical; Signal-anchor for type II membrane protein span at residues 15–35; sequence LLGCVAVFSVFVFTIQSSFFA. The Lumenal segment spans residues 36-474; sequence DNNRKLDLQP…CVRHPLKLDT (439 aa). Asparagine 88, asparagine 120, asparagine 155, and asparagine 243 each carry an N-linked (GlcNAc...) asparagine glycan. The disordered stretch occupies residues 376–421; that stretch reads RLQRSQQPTSSKRDGSGQFGNCKVWGDADPTKGPVSGSPDMSETRK.

It belongs to the glycosyltransferase 29 family. As to expression, highly expressed in inflorescences and siliques and at lower levels in roots, leaves and stems.

Its subcellular location is the golgi apparatus membrane. In terms of biological role, required for normal pollen grain germination and pollen tube growth. May not be required for pollen development and female gametophytic function. This Arabidopsis thaliana (Mouse-ear cress) protein is Sialyltransferase-like protein 1.